The primary structure comprises 293 residues: NAD kinase (293 aa).

Asp-74 (proton acceptor) is an active-site residue. Residues 74-75 (DG), 148-149 (NE), His-159, Arg-176, Asp-178, Thr-186, 189-194 (TAYSLS), and Gln-248 each bind NAD(+).

It belongs to the NAD kinase family. Homodimer. The cofactor is a divalent metal cation.

The protein resides in the cytoplasm. It catalyses the reaction NAD(+) + ATP = ADP + NADP(+) + H(+). Its function is as follows. Involved in the regulation of the intracellular balance of NAD and NADP, and is a key enzyme in the biosynthesis of NADP. Catalyzes specifically the phosphorylation on 2'-hydroxyl of the adenosine moiety of NAD to yield NADP. The chain is NAD kinase from Yersinia pestis.